A 331-amino-acid polypeptide reads, in one-letter code: Taste receptor type 2 member 38 (331 aa).

The Extracellular portion of the chain corresponds to 1–17 (MLTLTPVLTVSYEAKIS). The chain crosses the membrane as a helical span at residues 18 to 38 (FLFLSVVEFAVGIMANAFIVL). Topologically, residues 39-54 (VNFWDMVKKQPLNNCD) are cytoplasmic. A helical membrane pass occupies residues 55-75 (IALLCLSITRLFLQGLLLLDA). At 76–94 (IQLACFQQMKDPLSHNYQA) the chain is on the extracellular side. The chain crosses the membrane as a helical span at residues 95–115 (ILTLWMSANQVSLWLAACLSL). The Cytoplasmic portion of the chain corresponds to 116-142 (LYCAKIVRFSHTFPLHLASWVSRRFLQ). Residues 143–163 (MLLVALLFSGVCTALCLWDFF) traverse the membrane as a helical segment. Over 164–198 (SRSHTVVTSMLHMNNTEFNLQIEKLNFFYSFVFCN) the chain is Extracellular. Asn177 carries N-linked (GlcNAc...) asparagine glycosylation. A helical transmembrane segment spans residues 199 to 219 (VGSVPPSLVFLISSGVLVISL). Topologically, residues 220 to 243 (GNHMRTMKSQTRGSRDPSLEAHVR) are cytoplasmic. The helical transmembrane segment at 244-264 (AIIFLVSFLCFYVVSFCAALI) threads the bilayer. Topologically, residues 265-276 (SIPLLVLWHNKG) are extracellular. A helical transmembrane segment spans residues 277-297 (GVMVCIGMMAACPSGHAAILI). The Cytoplasmic segment spans residues 298-331 (SGNAKLKKVIVTILFWFQSRQKVRRVHKVLPRIL).

This sequence belongs to the G-protein coupled receptor T2R family. In terms of tissue distribution, expressed in tongue, stomach and duodenum.

Its subcellular location is the membrane. In terms of biological role, putative taste receptor which may play a role in the perception of bitterness. In Rattus norvegicus (Rat), this protein is Taste receptor type 2 member 38 (Tas2r38).